A 270-amino-acid chain; its full sequence is Type III pantothenate kinase (270 aa).

11–18 (DAGNSRIK) provides a ligand contact to ATP. Residues Y96 and 103–106 (GSDR) each bind substrate. D105 serves as the catalytic Proton acceptor. ATP is bound at residue T129. T195 contributes to the substrate binding site.

The protein belongs to the type III pantothenate kinase family. Homodimer. It depends on NH4(+) as a cofactor. Requires K(+) as cofactor.

It localises to the cytoplasm. The enzyme catalyses (R)-pantothenate + ATP = (R)-4'-phosphopantothenate + ADP + H(+). The protein operates within cofactor biosynthesis; coenzyme A biosynthesis; CoA from (R)-pantothenate: step 1/5. Catalyzes the phosphorylation of pantothenate (Pan), the first step in CoA biosynthesis. This chain is Type III pantothenate kinase, found in Paraburkholderia xenovorans (strain LB400).